Here is an 80-residue protein sequence, read N- to C-terminus: Probable small nuclear ribonucleoprotein G (80 aa).

The region spanning G5–V76 is the Sm domain.

This sequence belongs to the snRNP Sm proteins family.

Its subcellular location is the nucleus. Probable common Sm protein, is found in U1 and U2 snRNPs and may be part of the spliceosome. The polypeptide is Probable small nuclear ribonucleoprotein G (Arabidopsis thaliana (Mouse-ear cress)).